Consider the following 188-residue polypeptide: Heparin-binding hemagglutinin homolog (188 aa).

The disordered stretch occupies residues 162–188 (KAAAPARKAPAKKAPAKKAPAKKVTQK). The span at 170 to 188 (APAKKAPAKKAPAKKVTQK) shows a compositional bias: basic residues.

It to M.tuberculosis HbhA.

Its function is as follows. Might mediate adherence to host cells by binding sulfated glycoconjugates. The protein is Heparin-binding hemagglutinin homolog (hbhA) of Mycobacterium leprae (strain TN).